The sequence spans 856 residues: Lon protease (856 aa).

Residues 68 to 261 (FPVLPLRDIV…KVLGLMESEI (194 aa)) form the Lon N-terminal domain. Residue 412-419 (GPPGVGKT) coordinates ATP. A Lon proteolytic domain is found at 647–828 (EDQVGVVTGL…DEVLHHALLR (182 aa)). Residues Ser734 and Lys777 contribute to the active site.

The protein belongs to the peptidase S16 family. As to quaternary structure, homohexamer. Organized in a ring with a central cavity.

It is found in the cytoplasm. The enzyme catalyses Hydrolysis of proteins in presence of ATP.. Functionally, ATP-dependent serine protease that mediates the selective degradation of mutant and abnormal proteins as well as certain short-lived regulatory proteins. Required for cellular homeostasis and for survival from DNA damage and developmental changes induced by stress. Degrades polypeptides processively to yield small peptide fragments that are 5 to 10 amino acids long. Binds to DNA in a double-stranded, site-specific manner. This Azorhizobium caulinodans (strain ATCC 43989 / DSM 5975 / JCM 20966 / LMG 6465 / NBRC 14845 / NCIMB 13405 / ORS 571) protein is Lon protease.